The sequence spans 58 residues: UPF0339 protein MA_3316 (58 aa).

It belongs to the UPF0339 family.

This Methanosarcina acetivorans (strain ATCC 35395 / DSM 2834 / JCM 12185 / C2A) protein is UPF0339 protein MA_3316.